A 194-amino-acid polypeptide reads, in one-letter code: GTP cyclohydrolase 1 (194 aa).

Cysteine 85, histidine 88, and cysteine 156 together coordinate Zn(2+).

The protein belongs to the GTP cyclohydrolase I family. As to quaternary structure, toroid-shaped homodecamer, composed of two pentamers of five dimers.

The catalysed reaction is GTP + H2O = 7,8-dihydroneopterin 3'-triphosphate + formate + H(+). It functions in the pathway cofactor biosynthesis; 7,8-dihydroneopterin triphosphate biosynthesis; 7,8-dihydroneopterin triphosphate from GTP: step 1/1. In Bacteroides fragilis (strain YCH46), this protein is GTP cyclohydrolase 1.